A 432-amino-acid chain; its full sequence is Enolase 1 (432 aa).

(2R)-2-phosphoglycerate is bound at residue Q163. E205 acts as the Proton donor in catalysis. 3 residues coordinate Mg(2+): D242, E287, and D314. (2R)-2-phosphoglycerate is bound by residues K339, R368, S369, and K390. Catalysis depends on K339, which acts as the Proton acceptor.

This sequence belongs to the enolase family. It depends on Mg(2+) as a cofactor.

It localises to the cytoplasm. Its subcellular location is the secreted. The protein localises to the cell surface. The catalysed reaction is (2R)-2-phosphoglycerate = phosphoenolpyruvate + H2O. Its pathway is carbohydrate degradation; glycolysis; pyruvate from D-glyceraldehyde 3-phosphate: step 4/5. Its function is as follows. Catalyzes the reversible conversion of 2-phosphoglycerate (2-PG) into phosphoenolpyruvate (PEP). It is essential for the degradation of carbohydrates via glycolysis. The polypeptide is Enolase 1 (Lactobacillus johnsonii (strain CNCM I-12250 / La1 / NCC 533)).